A 571-amino-acid polypeptide reads, in one-letter code: Acetolactate synthase large subunit (571 aa).

Glutamate 51 contacts thiamine diphosphate. Residues arginine 153, 261–282 (HGTYEANMTMHHADVIFAIGVR), and 304–323 (DIDPTSISKTVSANIPIVGD) contribute to the FAD site. Residues 394 to 474 (QHQMFTALYY…VLILNLNNSS (81 aa)) form a thiamine pyrophosphate binding region. Aspartate 445 and asparagine 472 together coordinate Mg(2+).

This sequence belongs to the TPP enzyme family. In terms of assembly, dimer of large and small chains. Mg(2+) serves as cofactor. It depends on thiamine diphosphate as a cofactor.

The catalysed reaction is 2 pyruvate + H(+) = (2S)-2-acetolactate + CO2. The protein operates within amino-acid biosynthesis; L-isoleucine biosynthesis; L-isoleucine from 2-oxobutanoate: step 1/4. Its pathway is amino-acid biosynthesis; L-valine biosynthesis; L-valine from pyruvate: step 1/4. In Buchnera aphidicola subsp. Acyrthosiphon pisum (strain APS) (Acyrthosiphon pisum symbiotic bacterium), this protein is Acetolactate synthase large subunit (ilvI).